The primary structure comprises 406 residues: Tyrosine--tRNA ligase (406 aa).

Positions P51–H60 match the 'HIGH' region motif. Positions K236 to S240 match the 'KMSKS' region motif. K239 contributes to the ATP binding site. An S4 RNA-binding domain is found at I345–V405.

This sequence belongs to the class-I aminoacyl-tRNA synthetase family. TyrS type 2 subfamily. As to quaternary structure, homodimer.

It localises to the cytoplasm. The enzyme catalyses tRNA(Tyr) + L-tyrosine + ATP = L-tyrosyl-tRNA(Tyr) + AMP + diphosphate + H(+). Functionally, catalyzes the attachment of tyrosine to tRNA(Tyr) in a two-step reaction: tyrosine is first activated by ATP to form Tyr-AMP and then transferred to the acceptor end of tRNA(Tyr). The protein is Tyrosine--tRNA ligase of Wolinella succinogenes (strain ATCC 29543 / DSM 1740 / CCUG 13145 / JCM 31913 / LMG 7466 / NCTC 11488 / FDC 602W) (Vibrio succinogenes).